Consider the following 360-residue polypeptide: S-adenosylmethionine:tRNA ribosyltransferase-isomerase (360 aa).

Belongs to the QueA family. Monomer.

It is found in the cytoplasm. It carries out the reaction 7-aminomethyl-7-carbaguanosine(34) in tRNA + S-adenosyl-L-methionine = epoxyqueuosine(34) in tRNA + adenine + L-methionine + 2 H(+). Its pathway is tRNA modification; tRNA-queuosine biosynthesis. Functionally, transfers and isomerizes the ribose moiety from AdoMet to the 7-aminomethyl group of 7-deazaguanine (preQ1-tRNA) to give epoxyqueuosine (oQ-tRNA). The chain is S-adenosylmethionine:tRNA ribosyltransferase-isomerase from Burkholderia pseudomallei (strain 1106a).